The primary structure comprises 66 residues: MDWLAKYWWILVIVFLVGVLLNVIKDLKRVDHKKFLANKPELPPHRDFNDKWDDDDDWPKKDQPKK.

The chain crosses the membrane as a helical span at residues 4–24 (LAKYWWILVIVFLVGVLLNVI). The disordered stretch occupies residues 39-66 (KPELPPHRDFNDKWDDDDDWPKKDQPKK). Residues 42–51 (LPPHRDFNDK) are compositionally biased toward basic and acidic residues.

The protein belongs to the UPF0370 family.

The protein localises to the cell membrane. This chain is UPF0370 protein YpfN, found in Escherichia coli O139:H28 (strain E24377A / ETEC).